A 349-amino-acid chain; its full sequence is S-adenosylmethionine:tRNA ribosyltransferase-isomerase (349 aa).

Belongs to the QueA family. In terms of assembly, monomer.

It is found in the cytoplasm. It carries out the reaction 7-aminomethyl-7-carbaguanosine(34) in tRNA + S-adenosyl-L-methionine = epoxyqueuosine(34) in tRNA + adenine + L-methionine + 2 H(+). It participates in tRNA modification; tRNA-queuosine biosynthesis. Its function is as follows. Transfers and isomerizes the ribose moiety from AdoMet to the 7-aminomethyl group of 7-deazaguanine (preQ1-tRNA) to give epoxyqueuosine (oQ-tRNA). The chain is S-adenosylmethionine:tRNA ribosyltransferase-isomerase from Pseudomonas entomophila (strain L48).